The primary structure comprises 310 residues: MDGFIVVDKSAGMTSHDVVSAVRRIAGQKKVGHTGTLDPFATGVLPVALGEATKAIPFLDESIKEYRAVMKLGVATDTQDYTGKVLHESDWSHVTTSALNEICRMFVGKLSQVPPMFSALKQNGVPLYKLARQGAEVPRQPREIEIYSLVIEAVNLPEVAFTVRCSRGTYVRTLANDIGGKLGCGAHLLQLHRSLSGPFSINNAITLDDWARRMQDGRAGETLVSPFAALSHLKDFILTGKGAAKVANGVVPALEDFQVLSECELLRDELVRMSFGGTLLAVAKAGLPGDWKMLKNLKLSRVFNLDNSFT.

D38 serves as the catalytic Nucleophile.

The protein belongs to the pseudouridine synthase TruB family. Type 1 subfamily.

It carries out the reaction uridine(55) in tRNA = pseudouridine(55) in tRNA. Responsible for synthesis of pseudouridine from uracil-55 in the psi GC loop of transfer RNAs. This is tRNA pseudouridine synthase B from Geotalea uraniireducens (strain Rf4) (Geobacter uraniireducens).